Consider the following 269-residue polypeptide: uncharacterized protein (269 aa).

The next 4 helical transmembrane spans lie at 64–84 (FVYF…LAGV), 125–145 (YGIA…FLSF), 169–189 (FFIS…FLVL), and 230–250 (VFAT…IAIF).

It is found in the cell membrane. This is an uncharacterized protein from Mycoplasma genitalium (strain ATCC 33530 / DSM 19775 / NCTC 10195 / G37) (Mycoplasmoides genitalium).